The primary structure comprises 247 residues: ATP synthase subunit C lysine N-methyltransferase (247 aa).

Methionine 1 carries the N-acetylmethionine modification. Positions 1–12 are enriched in basic and acidic residues; that stretch reads MERVGTPEEERQ. The segment at 1-25 is disordered; the sequence is MERVGTPEEERQAGPVLPTSLESDS. The chain crosses the membrane as a helical span at residues 34–54; that stretch reads LITGVVGGALLTVYAVATPFI. The required for mitochondrial location stretch occupies residues 51–85; the sequence is TPFITPALRKVCLPFVPATSKQVENVVRMLRHRRG. Positions 209–247 are disordered; the sequence is QRGRGGRPNQEWVGQKNLSETAGLQASSSETRSKLLDVE. A compositionally biased stretch (polar residues) spans 224 to 238; that stretch reads KNLSETAGLQASSSE.

The protein belongs to the ANT/ATPSC lysine N-methyltransferase family. As to expression, ubiquitously expressed.

The protein localises to the mitochondrion membrane. The catalysed reaction is L-lysyl-[protein] + 3 S-adenosyl-L-methionine = N(6),N(6),N(6)-trimethyl-L-lysyl-[protein] + 3 S-adenosyl-L-homocysteine + 3 H(+). Functionally, mitochondrial protein-lysine N-methyltransferase that trimethylates ATP synthase subunit C, ATP5MC1 and ATP5MC2. Trimethylation is required for proper incorporation of the C subunit into the ATP synthase complex and mitochondrial respiration. Promotes chronic pain. Involved in persistent inflammatory and neuropathic pain: methyltransferase activity in the mitochondria of sensory neurons promotes chronic pain via a pathway that depends on the production of reactive oxygen species (ROS) and on the engagement of spinal cord microglia. This Mus musculus (Mouse) protein is ATP synthase subunit C lysine N-methyltransferase.